The primary structure comprises 613 residues: Ribosome-associated molecular chaperone SSB1 (613 aa).

Positions 1–391 (MAEGVFPGAI…ILTGQSTSDE (391 aa)) are nucleotide binding domain (NBD). ATP is bound by residues 16-18 (TTY), Lys-73, 205-207 (GGT), 271-278 (ERAKRTLS), and Gly-342. The inter-domain linker stretch occupies residues 392–402 (TKDLLLLDVAP). The substrate binding domain (SBD) stretch occupies residues 403–613 (LSLGVGMAGD…RAVTKAMSTR (211 aa)). The interval 516 to 612 (SEEIEQMVNQ…KRAVTKAMST (97 aa)) is lid domain (SBDalpha). The short motif at 574 to 582 (VEAALADAF) is the Nuclear export signal element.

Belongs to the heat shock protein 70 family. Ssb-type Hsp70 subfamily. As to quaternary structure, binds to ribosomes. Binds close to the ribosomal tunnel exit via contacts with both ribosomal proteins and rRNA. Directly interacts with nascent polypeptides. This interaction is dependent on the ribosome-associated complex (RAC). Interacts with SSE1. Interacts with FES1.

The protein resides in the cytoplasm. It carries out the reaction ATP + H2O = ADP + phosphate + H(+). In terms of biological role, ribosome-bound, Hsp70-type chaperone that assists in the cotranslational folding of newly synthesized proteins in the cytosol. Stimulates folding by interacting with nascent chains, binding to short, largely hydrophobic sequences exposed by unfolded proteins, thereby stabilizing longer, more slowly translated, and aggregation-prone nascent polypeptides and domains that cannot fold stably until fully synthesized. The Hsp70-protein substrate interaction depends on ATP-binding and on allosteric regulation between the NBD and the SBD. The ATP-bound state is characterized by a fast exchange rate of substrate (low affinity state), while in the ADP-bound state exchange is much slower (high affinity state). During the Hsp70 cycle, the chaperone switches between the ATP-bound state (open conformation) and the ADP-bound state (closed conformation) by major conformational rearrangements involving mainly the lid domain. Ssb cooperates with a specific Hsp40/Hsp70 co-chaperone termed the ribosome-associated complex (RAC), which stimulates the ATPase activity of the ribosome-associated pool of Ssbs and switches it to the high affinity substrate binding state. Hsp110 chaperone SSE1 and FES1 act as nucleotide exchange factors that cause substrate release. The polypeptide is Ribosome-associated molecular chaperone SSB1 (SSB1) (Kluyveromyces marxianus (Yeast)).